A 374-amino-acid chain; its full sequence is Proteasomal ubiquitin receptor ADRM1 homolog (374 aa).

One can recognise a Pru domain in the interval 13–131; it reads SSSGHIVEFK…KKVTDALNKP (119 aa). Disordered regions lie at residues 126–166, 187–223, and 334–374; these read DALN…MNAP, SDTLPISSVPRGEDASSEADCEPSTNAAEEGSSNPLS, and ANLT…MDVD. Polar residues-rich tracts occupy residues 141–163 and 209–223; these read SAGSNANTDRQSAGGSLISSSDM and PSTNAAEEGSSNPLS. One can recognise a DEUBAD domain in the interval 239 to 346; it reads SQKKEVAVSL…TKAEGGEDAA (108 aa). Residues 354 to 368 are compositionally biased toward basic and acidic residues; the sequence is DATREPEPKRNRPDN.

The protein belongs to the ADRM1 family. In terms of assembly, component of the 19S proteasome regulatory particle complex. The 26S proteasome consists of a 20S core particle (CP) and two 19S regulatory subunits (RP). Interacts with deubiquitinase ubh-4.

The protein localises to the cytoplasm. It is found in the nucleus. In terms of biological role, may function as a proteasomal ubiquitin receptor. May promote the deubiquitinating activity associated with the 26S proteasome. In Caenorhabditis elegans, this protein is Proteasomal ubiquitin receptor ADRM1 homolog.